We begin with the raw amino-acid sequence, 148 residues long: Lysozyme C-2 (148 aa).

The first 18 residues, 1–18 (MKTLLTLGLLLLSVTAQA), serve as a signal peptide directing secretion. The C-type lysozyme domain occupies 19-148 (KVYERCEFAR…LSQYIRNCGV (130 aa)). Cystine bridges form between cysteine 24–cysteine 146, cysteine 48–cysteine 134, cysteine 83–cysteine 99, and cysteine 95–cysteine 113. Active-site residues include glutamate 53 and aspartate 71.

It belongs to the glycosyl hydrolase 22 family. As to quaternary structure, monomer. In terms of tissue distribution, expressed weakly in myeloblasts, moderately in immature macrophages, and strongly in both mature macrophages and macrophage-rich tissues.

Its subcellular location is the secreted. The enzyme catalyses Hydrolysis of (1-&gt;4)-beta-linkages between N-acetylmuramic acid and N-acetyl-D-glucosamine residues in a peptidoglycan and between N-acetyl-D-glucosamine residues in chitodextrins.. Functionally, lysozymes have primarily a bacteriolytic function; those in tissues and body fluids are associated with the monocyte-macrophage system and enhance the activity of immunoagents. Lyz2 is active against a range of Gram-positive and Gram-negative bacteria. More effective than Lyz1 in killing Gram-negative bacteria. Lyz1 and Lyz2 are equally effective in killing Gram-positive bacteria. This is Lysozyme C-2 (Lyz2) from Mus musculus (Mouse).